The primary structure comprises 72 residues: Bowman-Birk type trypsin inhibitor (72 aa).

Cystine bridges form between cysteine 12–cysteine 66, cysteine 13–cysteine 28, cysteine 16–cysteine 62, cysteine 18–cysteine 26, cysteine 36–cysteine 43, cysteine 40–cysteine 55, and cysteine 45–cysteine 53.

This sequence belongs to the Bowman-Birk serine protease inhibitor family.

In Vigna radiata var. radiata (Mung bean), this protein is Bowman-Birk type trypsin inhibitor.